A 104-amino-acid polypeptide reads, in one-letter code: Translation initiation factor 1A (104 aa).

The segment covering 1–14 has biased composition (low complexity); the sequence is MRGQQTPPQQPTRV. Residues 1–20 form a disordered region; sequence MRGQQTPPQQPTRVRTPREN. Residues 12-87 form the S1-like domain; sequence TRVRTPRENE…EKCDVIWRYT (76 aa).

Belongs to the eIF-1A family.

Its function is as follows. Seems to be required for maximal rate of protein biosynthesis. Enhances ribosome dissociation into subunits and stabilizes the binding of the initiator Met-tRNA(I) to 40 S ribosomal subunits. The protein is Translation initiation factor 1A of Methanococcus maripaludis (strain DSM 14266 / JCM 13030 / NBRC 101832 / S2 / LL).